We begin with the raw amino-acid sequence, 181 residues long: uncharacterized protein (181 aa).

Belongs to the M.jannaschii MJ0150/MJ0739/MJ0745/MJ1460/MJ1642 family.

This is an uncharacterized protein from Methanocaldococcus jannaschii (strain ATCC 43067 / DSM 2661 / JAL-1 / JCM 10045 / NBRC 100440) (Methanococcus jannaschii).